The primary structure comprises 650 residues: Chaperone protein DnaK (650 aa).

The residue at position 200 (threonine 200) is a Phosphothreonine; by autocatalysis.

Belongs to the heat shock protein 70 family.

Functionally, acts as a chaperone. In Burkholderia orbicola (strain MC0-3), this protein is Chaperone protein DnaK.